A 214-amino-acid polypeptide reads, in one-letter code: Probable GTP-binding protein EngB (214 aa).

The region spanning 24–199 is the EngB-type G domain; it reads GGYEVAFAGR…RGIVGGWLGL (176 aa). GTP-binding positions include 32 to 39, 59 to 63, 77 to 80, 144 to 147, and 178 to 180; these read GRSNAGKS, GRTQQ, DLPG, TKAD, and YSG. Residues S39 and T61 each contribute to the Mg(2+) site.

Belongs to the TRAFAC class TrmE-Era-EngA-EngB-Septin-like GTPase superfamily. EngB GTPase family. Mg(2+) is required as a cofactor.

Functionally, necessary for normal cell division and for the maintenance of normal septation. This chain is Probable GTP-binding protein EngB, found in Xanthomonas axonopodis pv. citri (strain 306).